The sequence spans 105 residues: Ketoisovalerate oxidoreductase subunit VorD (105 aa).

4Fe-4S ferredoxin-type domains are found at residues 44-73 (FMPVIDESKCVKCYICWKFCPEPAIYIKED) and 74-103 (GFVAIDYDYCKGCGICANECPTKAITMVRE). [4Fe-4S] cluster-binding residues include Cys-53, Cys-56, Cys-59, Cys-63, Cys-83, Cys-86, Cys-89, and Cys-93.

Heterotetramer of one alpha, one beta, one delta and one gamma chain. Requires [4Fe-4S] cluster as cofactor.

It catalyses the reaction 3-methyl-2-oxobutanoate + 2 oxidized [2Fe-2S]-[ferredoxin] + CoA = 2-methylpropanoyl-CoA + 2 reduced [2Fe-2S]-[ferredoxin] + CO2 + H(+). The protein is Ketoisovalerate oxidoreductase subunit VorD (vorD) of Pyrococcus abyssi (strain GE5 / Orsay).